The primary structure comprises 690 residues: Guanylate cyclase soluble subunit alpha-1 (690 aa).

Serine 266 is subject to Phosphoserine. The Guanylate cyclase domain occupies 480–607; it reads TMLFSDIVGF…NNVTLANKFE (128 aa).

It belongs to the adenylyl cyclase class-4/guanylyl cyclase family. As to quaternary structure, the active enzyme is formed by a heterodimer of an alpha and a beta subunit. Heterodimer with GUCY1B1. Requires Mg(2+) as cofactor. The cofactor is Mn(2+).

The protein resides in the cytoplasm. The catalysed reaction is GTP = 3',5'-cyclic GMP + diphosphate. Activated by nitric oxide in the presence of magnesium or manganese ions. This is Guanylate cyclase soluble subunit alpha-1 (Gucy1a1) from Rattus norvegicus (Rat).